The chain runs to 222 residues: 7-cyano-7-deazaguanine synthase (222 aa).

8 to 18 (LSGGMDSTTAA) serves as a coordination point for ATP. Zn(2+) contacts are provided by Cys-187, Cys-195, Cys-198, and Cys-201.

The protein belongs to the QueC family. The cofactor is Zn(2+).

It carries out the reaction 7-carboxy-7-deazaguanine + NH4(+) + ATP = 7-cyano-7-deazaguanine + ADP + phosphate + H2O + H(+). It participates in purine metabolism; 7-cyano-7-deazaguanine biosynthesis. Functionally, catalyzes the ATP-dependent conversion of 7-carboxy-7-deazaguanine (CDG) to 7-cyano-7-deazaguanine (preQ(0)). This chain is 7-cyano-7-deazaguanine synthase, found in Nautilia profundicola (strain ATCC BAA-1463 / DSM 18972 / AmH).